The chain runs to 252 residues: ATP synthase subunit a (252 aa).

5 helical membrane passes run 33–53 (GQVFITTWFVMALLIAVAFVA), 92–112 (VPFVGTLFLFIFVCNWSGALV), 130–150 (DINTTVALALLVSLAYFYAGL), 196–216 (LVVSVLVLLVPLFVPLPVMVL), and 217–237 (GLFTSAIQALVFATLAATYIG).

Belongs to the ATPase A chain family. As to quaternary structure, F-type ATPases have 2 components, CF(1) - the catalytic core - and CF(0) - the membrane proton channel. CF(1) has five subunits: alpha(3), beta(3), gamma(1), delta(1), epsilon(1). CF(0) has four main subunits: a, b, b' and c.

It localises to the cellular thylakoid membrane. In terms of biological role, key component of the proton channel; it plays a direct role in the translocation of protons across the membrane. The sequence is that of ATP synthase subunit a from Thermosynechococcus vestitus (strain NIES-2133 / IAM M-273 / BP-1).